Consider the following 494-residue polypeptide: Tripartite motif-containing protein 5 (494 aa).

The residue at position 2 (Ala-2) is an N-acetylalanine. Residues 15 to 59 form an RING-type zinc finger; that stretch reads CPICLELLTEPLSLDCGHSFCQACITANHKESTPHQGERSCPLCR. At Ser-86 the chain carries Phosphoserine. Residues 91 to 132 form a B box-type zinc finger; sequence QKVGHCARHGEKLLLFCEQDGNVICWLCERSQEHRGHHTFLV. Residues Cys-96, His-99, Cys-118, and His-124 each contribute to the Zn(2+) site. Residues 131–223 adopt a coiled-coil conformation; the sequence is LVEEVAEKYQ…RLVQSESDMA (93 aa). The segment at 186–199 is required for interaction with GABARAP and for autophagy; that stretch reads FKQLRDILDCEESK. Residues 280–494 enclose the B30.2/SPRY domain; sequence PDLKGMLQAF…LPMTLCSPSS (215 aa).

This sequence belongs to the TRIM/RBCC family. As to quaternary structure, can form homodimers and homotrimers. In addition to lower-order dimerization, also exhibits a higher-order multimerization and both low- and high-order multimerizations are essential for its restriction activity. Interacts with BTBD1 and BTBD2. Interacts with PSMC4, PSMC5, PSMD7 and HSPA8/HSC70. Interacts (via B30.2/SPRY domain) with HSPA1A/B. Interacts with PSMC2, MAP3K7/TAK1, TAB2 and TAB3. Interacts with SQSTM1. Interacts with TRIM6 and TRIM34. Interacts with ULK1 (phosphorylated form), GABARAP, GABARAPL1, GABARAPL2, MAP1LC3A, MAP1LC3C and BECN1. In terms of processing, degraded in a proteasome-independent fashion in the absence of viral infection but in a proteasome-dependent fashion following exposure to restriction sensitive virus. Post-translationally, autoubiquitinated in a RING finger- and UBE2D2-dependent manner. Monoubiquitinated by TRIM21. Deubiquitinated by Yersinia YopJ. Ubiquitination may not lead to proteasomal degradation.

The protein localises to the cytoplasm. Its subcellular location is the nucleus. The catalysed reaction is S-ubiquitinyl-[E2 ubiquitin-conjugating enzyme]-L-cysteine + [acceptor protein]-L-lysine = [E2 ubiquitin-conjugating enzyme]-L-cysteine + N(6)-ubiquitinyl-[acceptor protein]-L-lysine.. It functions in the pathway protein modification; protein ubiquitination. Capsid-specific restriction factor that prevents infection from non-host-adapted retroviruses. Blocks viral replication early in the life cycle, after viral entry but before reverse transcription. In addition to acting as a capsid-specific restriction factor, also acts as a pattern recognition receptor that activates innate immune signaling in response to the retroviral capsid lattice. Binding to the viral capsid triggers its E3 ubiquitin ligase activity, and in concert with the heterodimeric ubiquitin conjugating enzyme complex UBE2V1-UBE2N (also known as UBC13-UEV1A complex) generates 'Lys-63'-linked polyubiquitin chains, which in turn are catalysts in the autophosphorylation of the MAP3K7/TAK1 complex (includes TAK1, TAB2, and TAB3). Activation of the MAP3K7/TAK1 complex by autophosphorylation results in the induction and expression of NF-kappa-B and MAPK-responsive inflammatory genes, thereby leading to an innate immune response in the infected cell. Plays a role in regulating autophagy through activation of autophagy regulator BECN1 by causing its dissociation from its inhibitors BCL2 and TAB2. This is Tripartite motif-containing protein 5 (TRIM5) from Saguinus oedipus (Cotton-top tamarin).